A 79-amino-acid chain; its full sequence is Large ribosomal subunit protein bL31 (79 aa).

Zn(2+)-binding residues include cysteine 16, cysteine 18, cysteine 37, and cysteine 40.

This sequence belongs to the bacterial ribosomal protein bL31 family. Type A subfamily. In terms of assembly, part of the 50S ribosomal subunit. The cofactor is Zn(2+).

Binds the 23S rRNA. The chain is Large ribosomal subunit protein bL31 from Coxiella burnetii (strain CbuG_Q212) (Coxiella burnetii (strain Q212)).